We begin with the raw amino-acid sequence, 384 residues long: Carbamoyl phosphate synthase small chain (384 aa).

The interval 1-192 (MPIAAAKPAL…FGPVAEQQGQ (192 aa)) is CPSase. Residues Ser51, Gly244, and Gly246 each contribute to the L-glutamine site. The 186-residue stretch at 196-381 (TVVALDFGVK…VKLMRQQKAE (186 aa)) folds into the Glutamine amidotransferase type-1 domain. Cys272 acts as the Nucleophile in catalysis. Positions 273, 276, 312, 314, and 315 each coordinate L-glutamine. Catalysis depends on residues His354 and Glu356.

Belongs to the CarA family. In terms of assembly, composed of two chains; the small (or glutamine) chain promotes the hydrolysis of glutamine to ammonia, which is used by the large (or ammonia) chain to synthesize carbamoyl phosphate. Tetramer of heterodimers (alpha,beta)4.

It carries out the reaction hydrogencarbonate + L-glutamine + 2 ATP + H2O = carbamoyl phosphate + L-glutamate + 2 ADP + phosphate + 2 H(+). The enzyme catalyses L-glutamine + H2O = L-glutamate + NH4(+). It participates in amino-acid biosynthesis; L-arginine biosynthesis; carbamoyl phosphate from bicarbonate: step 1/1. It functions in the pathway pyrimidine metabolism; UMP biosynthesis via de novo pathway; (S)-dihydroorotate from bicarbonate: step 1/3. Small subunit of the glutamine-dependent carbamoyl phosphate synthetase (CPSase). CPSase catalyzes the formation of carbamoyl phosphate from the ammonia moiety of glutamine, carbonate, and phosphate donated by ATP, constituting the first step of 2 biosynthetic pathways, one leading to arginine and/or urea and the other to pyrimidine nucleotides. The small subunit (glutamine amidotransferase) binds and cleaves glutamine to supply the large subunit with the substrate ammonia. The sequence is that of Carbamoyl phosphate synthase small chain from Synechocystis sp. (strain ATCC 27184 / PCC 6803 / Kazusa).